The following is a 164-amino-acid chain: Large ribosomal subunit protein eL24 (164 aa).

2 disordered regions span residues lysine 63–serine 82 and glutamate 117–alanine 164. The segment covering lysine 71 to tyrosine 81 has biased composition (basic residues). Basic and acidic residues predominate over residues glutamate 117 to valine 133.

It belongs to the eukaryotic ribosomal protein eL24 family.

It is found in the cytoplasm. The polypeptide is Large ribosomal subunit protein eL24 (RPL24) (Cicer arietinum (Chickpea)).